The chain runs to 823 residues: ATP-dependent DNA helicase At3g02060, chloroplastic (823 aa).

Residues 1–53 constitute a chloroplast transit peptide; sequence MMSLLPNPDPITVPLVLKLCSFPPPRRLFSLRLRRFTRKSSSLLPLVAVSSLS. In terms of domain architecture, Helicase ATP-binding spans 285–447; that stretch reads LTERETPMDR…LTGFRDASLI (163 aa). 298 to 305 lines the ATP pocket; it reads GDVGFGKT. The DEEQ box signature appears at 400–403; that stretch reads DEEQ. The Helicase C-terminal domain maps to 465–622; that stretch reads RKEKVIEAIK…GFQLAEKDMG (158 aa).

This sequence belongs to the helicase family.

The protein resides in the plastid. It is found in the chloroplast. It carries out the reaction ATP + H2O = ADP + phosphate + H(+). This Arabidopsis thaliana (Mouse-ear cress) protein is ATP-dependent DNA helicase At3g02060, chloroplastic.